The chain runs to 395 residues: Nitrite extrusion protein (395 aa).

A run of 12 helical transmembrane segments spans residues 15–35 (SLVAGFMVWVLISSLISQITL), 44–64 (ISLVTAIPVILGSLLRIPLGY), 73–93 (LMFMVSFILLLFPVFWISIAD), 96–116 (FDLIAGGFFLGIGGAVFSIGV), 133–153 (GIYGAGNIGTAVTTFAAPVIA), 160–180 (STVQMYLILLAVFALLHVLFG), 203–223 (VLWFLSLFYFITFGAFVAFTI), 240–262 (AGLRTAGFIAVSTLLRPAGGFLA), 271–291 (LMFVFAGLTLSGIILSFSPTI), 293–313 (LYTFGSLTVAVCSGIGNGTVF), 330–350 (IVSAMGGLGGFFPPLILASVF), and 357–377 (AIGFMALSEVALASFVLVIWM).

The protein belongs to the major facilitator superfamily. Nitrate/nitrite porter (TC 2.A.1.8) family.

It localises to the cell membrane. Functionally, involved in excretion of nitrite produced by the dissimilatory reduction of nitrate. The protein is Nitrite extrusion protein (narK) of Bacillus subtilis (strain 168).